A 286-amino-acid polypeptide reads, in one-letter code: Homeobox-leucine zipper protein ATHB-20 (286 aa).

The homeobox DNA-binding region spans 84–143; it reads LGEKKKRLQLEQVKALEKSFELGNKLEPERKIQLAKALGMQPRQIAIWFQNRRARWKTRQ. The interval 144-179 is leucine-zipper; the sequence is LERDYDSLKKQFESLKSDNASLLAYNKKLLAEVMAL.

Belongs to the HD-ZIP homeobox family. Class I subfamily. In terms of tissue distribution, widely expressed.

The protein resides in the nucleus. Probable transcription factor. In Arabidopsis thaliana (Mouse-ear cress), this protein is Homeobox-leucine zipper protein ATHB-20 (ATHB-20).